The sequence spans 413 residues: Alpha-1-antitrypsin-like protein GS55-LT (413 aa).

Positions Met-1 to Gly-21 are cleaved as a signal peptide. Residues Asn-65, Asn-102, and Asn-123 are each glycosylated (N-linked (GlcNAc...) asparagine). The segment at Arg-368–Arg-387 is RCL.

This sequence belongs to the serpin family.

Its subcellular location is the secreted. Its function is as follows. Inhibitor of serine proteases. In Ictidomys tridecemlineatus (Thirteen-lined ground squirrel), this protein is Alpha-1-antitrypsin-like protein GS55-LT.